Consider the following 215-residue polypeptide: MGLAGVCVLRRSAGYILGGAAGQSVAATAAARRRSEGGWASGGVRSFSRAAAAMAPIKVGDAIPAVEVFEGEPGNKVNLAELFKGKKGVLFGVPGAFTPGCSKTHLPGFVEQAEALKAKGVQVLACLSVNDAFVTGEWGRAHKVEGKVRLLADPTGAFGKETDLLLDDSLVSIFGNRRLKRFSMVVQDGIVKALNVEPDGTGLTCSLAPSIISQL.

The transit peptide at 1–53 (MGLAGVCVLRRSAGYILGGAAGQSVAATAAARRRSEGGWASGGVRSFSRAAAA) directs the protein to the mitochondrion. The 159-residue stretch at 57–215 (IKVGDAIPAV…SLAPSIISQL (159 aa)) folds into the Thioredoxin domain. At Lys76 the chain carries N6-acetyllysine. At Lys84 the chain carries N6-acetyllysine; alternate. Lys84 carries the post-translational modification N6-succinyllysine; alternate. Cys101 (cysteine sulfenic acid (-SOH) intermediate) is an active-site residue. A lipid anchor (S-palmitoyl cysteine) is attached at Cys101. Cys101 and Cys205 form a disulfide bridge. The residue at position 117 (Lys117) is an N6-succinyllysine. A phosphoserine mark is found at Ser172 and Ser183. Positions 213–215 (SQL) match the Microbody targeting signal motif.

The protein belongs to the peroxiredoxin family. Prx5 subfamily. In terms of assembly, monomer. S-palmitoylated. Palmitoylation occurs on the active site, inhibiting its reactivity; therefore PRDX5 palmitoylation status determines its antioxidant capacity. Post-translationally, S-palmitoylated. Depalmitoylated by ABHD10.

Its subcellular location is the mitochondrion. The protein resides in the cytoplasm. It localises to the peroxisome matrix. The catalysed reaction is a hydroperoxide + [thioredoxin]-dithiol = an alcohol + [thioredoxin]-disulfide + H2O. Thiol-specific peroxidase that catalyzes the reduction of hydrogen peroxide and organic hydroperoxides to water and alcohols, respectively. Plays a role in cell protection against oxidative stress by detoxifying peroxides and as sensor of hydrogen peroxide-mediated signaling events. This Papio hamadryas (Hamadryas baboon) protein is Peroxiredoxin-5, mitochondrial (PRDX5).